The following is a 418-amino-acid chain: Actin-related protein 3-B (418 aa).

Belongs to the actin family. ARP3 subfamily. Component of the Arp2/3 complex composed of actr2/arp2, actr3/arp3, arpc1 (arpc1a or arpc1b), arpc2, arpc3, arpc4 and arpc5.

The protein localises to the cytoplasm. It is found in the cytoskeleton. It localises to the cell projection. The protein resides in the nucleus. Functionally, ATP-binding component of the Arp2/3 complex, a multiprotein complex that mediates actin polymerization upon stimulation by nucleation-promoting factor (NPF). The Arp2/3 complex mediates the formation of branched actin networks in the cytoplasm, providing the force for cell motility. Seems to contact the pointed end of the daughter actin filament. In addition to its role in the cytoplasmic cytoskeleton, the Arp2/3 complex also promotes actin polymerization in the nucleus, thereby regulating gene transcription and repair of damaged DNA. The Arp2/3 complex promotes homologous recombination (HR) repair in response to DNA damage by promoting nuclear actin polymerization, leading to drive motility of double-strand breaks (DSBs). In Xenopus laevis (African clawed frog), this protein is Actin-related protein 3-B (actr3-b).